Here is a 272-residue protein sequence, read N- to C-terminus: ATP synthase subunit delta (272 aa).

Belongs to the ATPase delta chain family. In terms of assembly, F-type ATPases have 2 components, F(1) - the catalytic core - and F(0) - the membrane proton channel. F(1) has five subunits: alpha(3), beta(3), gamma(1), delta(1), epsilon(1). F(0) has three main subunits: a(1), b(2) and c(10-14). The alpha and beta chains form an alternating ring which encloses part of the gamma chain. F(1) is attached to F(0) by a central stalk formed by the gamma and epsilon chains, while a peripheral stalk is formed by the delta and b chains.

The protein localises to the cell membrane. F(1)F(0) ATP synthase produces ATP from ADP in the presence of a proton or sodium gradient. F-type ATPases consist of two structural domains, F(1) containing the extramembraneous catalytic core and F(0) containing the membrane proton channel, linked together by a central stalk and a peripheral stalk. During catalysis, ATP synthesis in the catalytic domain of F(1) is coupled via a rotary mechanism of the central stalk subunits to proton translocation. Functionally, this protein is part of the stalk that links CF(0) to CF(1). It either transmits conformational changes from CF(0) to CF(1) or is implicated in proton conduction. The chain is ATP synthase subunit delta from Corynebacterium jeikeium (strain K411).